Here is a 370-residue protein sequence, read N- to C-terminus: 3-isopropylmalate dehydrogenase (370 aa).

Substrate is bound by residues arginine 99, arginine 109, arginine 137, and aspartate 227. Positions 227, 251, and 255 each coordinate Mg(2+). 290 to 302 (GSAPDIAGQDKAN) contacts NAD(+).

The protein belongs to the isocitrate and isopropylmalate dehydrogenases family. LeuB type 1 subfamily. As to quaternary structure, homodimer. Mg(2+) is required as a cofactor. The cofactor is Mn(2+).

The protein localises to the cytoplasm. It catalyses the reaction (2R,3S)-3-isopropylmalate + NAD(+) = 4-methyl-2-oxopentanoate + CO2 + NADH. Its pathway is amino-acid biosynthesis; L-leucine biosynthesis; L-leucine from 3-methyl-2-oxobutanoate: step 3/4. In terms of biological role, catalyzes the oxidation of 3-carboxy-2-hydroxy-4-methylpentanoate (3-isopropylmalate) to 3-carboxy-4-methyl-2-oxopentanoate. The product decarboxylates to 4-methyl-2 oxopentanoate. This Rhodospirillum rubrum (strain ATCC 11170 / ATH 1.1.1 / DSM 467 / LMG 4362 / NCIMB 8255 / S1) protein is 3-isopropylmalate dehydrogenase.